The chain runs to 122 residues: Large ribosomal subunit protein uL14c (122 aa).

This sequence belongs to the universal ribosomal protein uL14 family. Part of the 50S ribosomal subunit.

It localises to the plastid. The protein localises to the chloroplast. Functionally, binds to 23S rRNA. The polypeptide is Large ribosomal subunit protein uL14c (Fagopyrum esculentum subsp. ancestrale (Wild buckwheat)).